A 156-amino-acid polypeptide reads, in one-letter code: MSKPGGHPRHGRRDGIDPVLRSRARRRALQAVYAWQISGGFAKQVIAQFAHEQAHEVADLAYFENLVEGVLTNRAELDTALTPYLDRGVEEVDAIERAVLRLAAYELLYRQDVPYRVVINEAIETAKRFGSEHGHTYVNGVLDRAAVEWRKVESGA.

This sequence belongs to the NusB family.

Involved in transcription antitermination. Required for transcription of ribosomal RNA (rRNA) genes. Binds specifically to the boxA antiterminator sequence of the ribosomal RNA (rrn) operons. The sequence is that of Transcription antitermination protein NusB from Xanthomonas oryzae pv. oryzae (strain MAFF 311018).